Reading from the N-terminus, the 860-residue chain is Alanine--tRNA ligase (860 aa).

Positions 553, 557, 655, and 659 each coordinate Zn(2+).

This sequence belongs to the class-II aminoacyl-tRNA synthetase family. The cofactor is Zn(2+).

Its subcellular location is the cytoplasm. The enzyme catalyses tRNA(Ala) + L-alanine + ATP = L-alanyl-tRNA(Ala) + AMP + diphosphate. In terms of biological role, catalyzes the attachment of alanine to tRNA(Ala) in a two-step reaction: alanine is first activated by ATP to form Ala-AMP and then transferred to the acceptor end of tRNA(Ala). Also edits incorrectly charged Ser-tRNA(Ala) and Gly-tRNA(Ala) via its editing domain. In Legionella pneumophila (strain Lens), this protein is Alanine--tRNA ligase.